The following is a 244-amino-acid chain: Orotidine 5'-phosphate decarboxylase (244 aa).

Substrate is bound by residues D20, K42, 70–79 (DLKFFDIPAT), T125, R186, Q195, G215, and R216. Residue K72 is the Proton donor of the active site.

It belongs to the OMP decarboxylase family. Type 1 subfamily. As to quaternary structure, homodimer.

It carries out the reaction orotidine 5'-phosphate + H(+) = UMP + CO2. The protein operates within pyrimidine metabolism; UMP biosynthesis via de novo pathway; UMP from orotate: step 2/2. In terms of biological role, catalyzes the decarboxylation of orotidine 5'-monophosphate (OMP) to uridine 5'-monophosphate (UMP). The polypeptide is Orotidine 5'-phosphate decarboxylase (Xylella fastidiosa (strain M23)).